A 473-amino-acid chain; its full sequence is Glycine--tRNA ligase (473 aa).

The substrate site is built by arginine 101 and glutamate 172. Residues 204–206 (RNE), 214–219 (FRTREF), 289–290 (EL), and 333–336 (GVER) contribute to the ATP site. 219-223 (FEQME) provides a ligand contact to substrate. Position 329 to 333 (329 to 333 (EPSVG)) interacts with substrate.

The protein belongs to the class-II aminoacyl-tRNA synthetase family. In terms of assembly, homodimer.

The protein localises to the cytoplasm. It carries out the reaction tRNA(Gly) + glycine + ATP = glycyl-tRNA(Gly) + AMP + diphosphate. Its function is as follows. Catalyzes the attachment of glycine to tRNA(Gly). The polypeptide is Glycine--tRNA ligase (Ureaplasma urealyticum serovar 10 (strain ATCC 33699 / Western)).